The primary structure comprises 309 residues: 2-phospho-L-lactate transferase (309 aa).

Residues aspartate 50 and lysine 89 each coordinate 7,8-didemethyl-8-hydroxy-5-deazariboflavin.

It belongs to the CofD family. As to quaternary structure, homodimer. Mg(2+) serves as cofactor.

It catalyses the reaction (2S)-lactyl-2-diphospho-5'-guanosine + 7,8-didemethyl-8-hydroxy-5-deazariboflavin = oxidized coenzyme F420-0 + GMP + H(+). It participates in cofactor biosynthesis; coenzyme F420 biosynthesis. Catalyzes the transfer of the 2-phospholactate moiety from (2S)-lactyl-2-diphospho-5'-guanosine to 7,8-didemethyl-8-hydroxy-5-deazariboflavin (FO) with the formation of oxidized coenzyme F420-0 and GMP. This Methanococcus maripaludis (strain C6 / ATCC BAA-1332) protein is 2-phospho-L-lactate transferase.